A 511-amino-acid chain; its full sequence is V-type proton ATPase subunit B, brain isoform (511 aa).

R400 is an ATP binding site.

It belongs to the ATPase alpha/beta chains family. V-ATPase is a heteromultimeric enzyme made up of two complexes: the ATP-hydrolytic V1 complex and the proton translocation V0 complex. The V1 complex consists of three catalytic AB heterodimers that form a heterohexamer, three peripheral stalks each consisting of EG heterodimers, one central rotor including subunits D and F, and the regulatory subunits C and H. The proton translocation complex V0 consists of the proton transport subunit a, a ring of proteolipid subunits c9c'', rotary subunit d, subunits e and f, and the accessory subunits ATP6AP1/Ac45 and ATP6AP2/PRR.

The protein resides in the apical cell membrane. It localises to the melanosome. Its subcellular location is the cytoplasm. The protein localises to the cytoplasmic vesicle. It is found in the secretory vesicle. The protein resides in the synaptic vesicle membrane. It localises to the clathrin-coated vesicle membrane. In terms of biological role, non-catalytic subunit of the V1 complex of vacuolar(H+)-ATPase (V-ATPase), a multisubunit enzyme composed of a peripheral complex (V1) that hydrolyzes ATP and a membrane integral complex (V0) that translocates protons. V-ATPase is responsible for acidifying and maintaining the pH of intracellular compartments and in some cell types, is targeted to the plasma membrane, where it is responsible for acidifying the extracellular environment. In renal intercalated cells, can partially compensate the lack of ATP6V1B1 and mediate secretion of protons (H+) into the urine under base-line conditions but not in conditions of acid load. The protein is V-type proton ATPase subunit B, brain isoform (ATP6V1B2) of Pongo abelii (Sumatran orangutan).